The chain runs to 1441 residues: MASLAALALSLLLRLQLPPLPGARAQSAAGGCSFDEHYSNCGYSVALGTNGFTWEQINTWEKPMLDQAVPTGSFMMVNSSGRASGQKAHLLLPTLKENDTHCIDFHYYFSSRDRSSPGALNVYVKVNGGPQGNPVWNVSGVVTEGWVKAELAISTFWPHFYQVIFESVSLKGHPGYIAVDEVRVLAHPCRKAPHFLRLQNVEVNVGQNATFQCIAGGKWSQHDKLWLQQWNGRDTALMVTRVVNHRRFSATVSVADTAQRSVSKYRCVIRSDGGSGVSNYAELIVKEPPTPIAPPELLAVGATYLWIKPNANSIIGDGPIILKEVEYRTTTGTWAETHIVDSPNYKLWHLDPDVEYEIRVLLTRPGEGGTGPPGPPLTTRTKCADPVHGPQNVEIVDIRARQLTLQWEPFGYAVTRCHSYNLTVQYQYVFNQQQYEAEEVIQTSSHYTLRGLRPFMTIRLRLLLSNPEGRMESEELVVQTEEDVPGAVPLESIQGGPFEEKIYIQWKPPNETNGVITLYEINYKAVGSLDPSADLSSQRGKVFKLRNETHHLFVGLYPGTTYSFTIKASTAKGFGPPVTTRIATKISAPSMPEYDTDTPLNETDTTITVMLKPAQSRGAPVSVYQLVVKEERLQKSRRAADIIECFSVPVSYRNASSLDSLHYFAAELKPANLPVTQPFTVGDNKTYNGYWNPPLSPLKSYSIYFQALSKANGETKINCVRLATKGASTQNSNTVEPEKQVDNTVKMAGVIAGLLMFIIILLGVMLTIKRRRNAYSYSYYLKLAKKQKETQSGAQREMGPVASADKPTTKLSASRNDEGFSSSSQDVNGFTDGSRGELSQPTLTIQTHPYRTCDPVEMSYPRDQFQPAIRVADLLQHITQMKRGQGYGFKEEYEALPEGQTASWDTAKEDENRNKNRYGNIISYDHSRVRLLVLDGDPHSDYINANYIDGYHRPRHYIATQGPMQETVKDFWRMIWQENSASIVMVTNLVEVGRVKCVRYWPDDTEVYGDIKVTLIETEPLAEYVIRTFTVQKKGYHEIRELRLFHFTSWPDHGVPCYATGLLGFVRQVKFLNPPEAGPIVVHCSAGAGRTGCFIAIDTMLDMAENEGVVDIFNCVRELRAQRVNLVQTEEQYVFVHDAILEACLCGNTAIPVCEFRSLYYNISRLDPQTNSSQIKDEFQTLNIVTPRVRPEDCSIGLLPRNHDKNRSMDVLPLDRCLPFLISVDGESSNYINAALMDSHKQPAAFVVTQHPLPNTVADFWRLVFDYNCSSVVMLNEMDTAQFCMQYWPEKTSGCYGPIQVEFVSADIDEDIIHRIFRICNMARPQDGYRIVQHLQYIGWPAYRDTPPSKRSLLKVVRRLEKWQEQYDGREGRTVVHCLNGGGRSGTFCAICSVCEMIQQQNIIDVFHIVKTLRNNKSNMVETLEQYKFVYEVALEYLSSF.

An N-terminal signal peptide occupies residues 1–25 (MASLAALALSLLLRLQLPPLPGARA). Topologically, residues 26-747 (QSAAGGCSFD…EKQVDNTVKM (722 aa)) are extracellular. In terms of domain architecture, MAM spans 30–191 (GGCSFDEHYS…VRVLAHPCRK (162 aa)). N-linked (GlcNAc...) asparagine glycans are attached at residues asparagine 78, asparagine 98, asparagine 137, and asparagine 208. The region spanning 193-284 (PHFLRLQNVE…SGVSNYAELI (92 aa)) is the Ig-like C2-type domain. An intrachain disulfide couples cysteine 213 to cysteine 267. Fibronectin type-III domains are found at residues 291-384 (PIAP…TKCA), 389-483 (GPQN…TEED), 484-590 (VPGA…SAPS), and 591-726 (MPEY…ATKG). Asparagine 421, asparagine 510, asparagine 547, asparagine 601, asparagine 654, and asparagine 684 each carry an N-linked (GlcNAc...) asparagine glycan. A helical membrane pass occupies residues 748–768 (AGVIAGLLMFIIILLGVMLTI). Over 769 to 1441 (KRRRNAYSYS…EVALEYLSSF (673 aa)) the chain is Cytoplasmic. Positions 790–839 (TQSGAQREMGPVASADKPTTKLSASRNDEGFSSSSQDVNGFTDGSRGELS) are disordered. Residues 809–828 (TKLSASRNDEGFSSSSQDVN) are compositionally biased toward polar residues. Tyrosine-protein phosphatase domains follow at residues 889 to 1143 (FKEE…ILEA) and 1175 to 1437 (IKDE…ALEY). Substrate is bound by residues aspartate 1052, 1084-1090 (CSAGAGR), and glutamine 1128. Cysteine 1084 (phosphocysteine intermediate) is an active-site residue. Serine 1208 carries the phosphoserine modification. The active-site Phosphocysteine intermediate is the cysteine 1378.

This sequence belongs to the protein-tyrosine phosphatase family. Receptor class 2B subfamily. As to expression, expressed in colon, lung, heart and testis, as well as in fetal and adult brain. Not detected in muscle and peripheral blood leukocytes.

It is found in the membrane. It carries out the reaction O-phospho-L-tyrosyl-[protein] + H2O = L-tyrosyl-[protein] + phosphate. In terms of biological role, may be involved in both signal transduction and cellular adhesion in the CNS. The protein is Receptor-type tyrosine-protein phosphatase T (PTPRT) of Homo sapiens (Human).